The following is a 1056-amino-acid chain: Carbamoyl phosphate synthase large chain (1056 aa).

A carboxyphosphate synthetic domain region spans residues methionine 1–glutamate 401. Arginine 129, arginine 169, glycine 175, glycine 176, lysine 208, isoleucine 210, glutamate 215, glycine 241, isoleucine 242, histidine 243, glutamine 284, and glutamate 298 together coordinate ATP. An ATP-grasp 1 domain is found at lysine 133–valine 327. Glutamine 284, glutamate 298, and asparagine 300 together coordinate Mg(2+). 3 residues coordinate Mn(2+): glutamine 284, glutamate 298, and asparagine 300. An oligomerization domain region spans residues isoleucine 402–serine 546. Residues glutamine 547–histidine 929 form a carbamoyl phosphate synthetic domain region. The region spanning aspartate 671–leucine 861 is the ATP-grasp 2 domain. ATP-binding residues include arginine 707, alanine 746, leucine 748, glutamate 752, glycine 777, valine 778, histidine 779, serine 780, glutamine 820, and glutamate 832. Mg(2+) contacts are provided by glutamine 820, glutamate 832, and asparagine 834. Mn(2+) is bound by residues glutamine 820, glutamate 832, and asparagine 834. The MGS-like domain occupies isoleucine 930–lysine 1056. The allosteric domain stretch occupies residues isoleucine 930–lysine 1056.

It belongs to the CarB family. Composed of two chains; the small (or glutamine) chain promotes the hydrolysis of glutamine to ammonia, which is used by the large (or ammonia) chain to synthesize carbamoyl phosphate. Tetramer of heterodimers (alpha,beta)4. Mg(2+) serves as cofactor. Mn(2+) is required as a cofactor.

It catalyses the reaction hydrogencarbonate + L-glutamine + 2 ATP + H2O = carbamoyl phosphate + L-glutamate + 2 ADP + phosphate + 2 H(+). It carries out the reaction hydrogencarbonate + NH4(+) + 2 ATP = carbamoyl phosphate + 2 ADP + phosphate + 2 H(+). It functions in the pathway amino-acid biosynthesis; L-arginine biosynthesis; carbamoyl phosphate from bicarbonate: step 1/1. Its pathway is pyrimidine metabolism; UMP biosynthesis via de novo pathway; (S)-dihydroorotate from bicarbonate: step 1/3. In terms of biological role, large subunit of the glutamine-dependent carbamoyl phosphate synthetase (CPSase). CPSase catalyzes the formation of carbamoyl phosphate from the ammonia moiety of glutamine, carbonate, and phosphate donated by ATP, constituting the first step of 2 biosynthetic pathways, one leading to arginine and/or urea and the other to pyrimidine nucleotides. The large subunit (synthetase) binds the substrates ammonia (free or transferred from glutamine from the small subunit), hydrogencarbonate and ATP and carries out an ATP-coupled ligase reaction, activating hydrogencarbonate by forming carboxy phosphate which reacts with ammonia to form carbamoyl phosphate. In Limosilactobacillus reuteri (strain DSM 20016) (Lactobacillus reuteri), this protein is Carbamoyl phosphate synthase large chain.